The primary structure comprises 485 residues: Betaine aldehyde dehydrogenase (485 aa).

K(+) is bound by residues Thr-23, Ile-24, and Asp-90. 147 to 149 (GAW) contacts NAD(+). Lys-159 acts as the Charge relay system in catalysis. Residues 173–176 (KPSE) and 226–229 (EVGT) each bind NAD(+). Position 241 (Leu-241) interacts with K(+). Residue Glu-247 is the Proton acceptor of the active site. Residues Gly-249, Cys-281, and Glu-382 each contribute to the NAD(+) site. Catalysis depends on Cys-281, which acts as the Nucleophile. Cys-281 carries the post-translational modification Cysteine sulfenic acid (-SOH). Positions 452 and 455 each coordinate K(+). The active-site Charge relay system is Glu-459.

The protein belongs to the aldehyde dehydrogenase family. In terms of assembly, dimer of dimers. It depends on K(+) as a cofactor.

The enzyme catalyses betaine aldehyde + NAD(+) + H2O = glycine betaine + NADH + 2 H(+). The protein operates within amine and polyamine biosynthesis; betaine biosynthesis via choline pathway; betaine from betaine aldehyde: step 1/1. Its function is as follows. Involved in the biosynthesis of the osmoprotectant glycine betaine. Catalyzes the irreversible oxidation of betaine aldehyde to the corresponding acid. The polypeptide is Betaine aldehyde dehydrogenase (Marinomonas sp. (strain MWYL1)).